Reading from the N-terminus, the 361-residue chain is 24-methylenesterol C-methyltransferase 2 (361 aa).

The protein belongs to the class I-like SAM-binding methyltransferase superfamily. Erg6/SMT family.

The catalysed reaction is 24-methylidenelophenol + S-adenosyl-L-methionine = (Z)-24-ethylidenelophenol + S-adenosyl-L-homocysteine + H(+). The protein operates within steroid biosynthesis; sterol biosynthesis. Catalyzes the methyl transfer from S-adenosyl-methionine to the methylene group of 24-methylene lophenol to form 24-ethylidene lophenol. The sequence is that of 24-methylenesterol C-methyltransferase 2 (SMT2) from Arabidopsis thaliana (Mouse-ear cress).